The following is a 130-amino-acid chain: Large ribosomal subunit protein uL14 (130 aa).

It belongs to the universal ribosomal protein uL14 family. In terms of assembly, part of the 50S ribosomal subunit. Forms a cluster with proteins L3 and L19. In the 70S ribosome, L14 and L19 interact and together make contacts with the 16S rRNA in bridges B5 and B8.

Its function is as follows. Binds to 23S rRNA. Forms part of two intersubunit bridges in the 70S ribosome. The sequence is that of Large ribosomal subunit protein uL14 from Leptospira biflexa serovar Patoc (strain Patoc 1 / Ames).